A 119-amino-acid chain; its full sequence is Beta-2-microglobulin (119 aa).

The first 20 residues, 1–20 (MARLVVVALLVLLCLSGLEA), serve as a signal peptide directing secretion. In terms of domain architecture, Ig-like C1-type spans 25-114 (PKIQVYSRHP…VTFTAPKTVK (90 aa)). Cys45 and Cys100 are joined by a disulfide.

The protein belongs to the beta-2-microglobulin family. Heterodimer of an alpha chain and a beta chain. Beta-2-microglobulin is the beta-chain of major histocompatibility complex class I molecules.

Its subcellular location is the secreted. Component of the class I major histocompatibility complex (MHC). Involved in the presentation of peptide antigens to the immune system. The sequence is that of Beta-2-microglobulin (B2M) from Chiropotes satanas (Brown-bearded saki).